We begin with the raw amino-acid sequence, 2568 residues long: Highly reducing polyketide synthase resH (2568 aa).

The Ketosynthase family 3 (KS3) domain maps to 9–437 (PEPIAIVGMA…GANAHAILDA (429 aa)). Residues Cys184, His319, and His359 each act as for beta-ketoacyl synthase activity in the active site. A Malonyl-CoA:ACP transacylase (MAT) domain is found at 549–877 (FIFTGQGAQW…KLAGSLFLSG (329 aa)). Residues 942–1081 (HDLLGSRLPG…TNDQLLWPDD (140 aa)) form an N-terminal hotdog fold region. A PKS/mFAS DH domain is found at 942 to 1244 (HDLLGSRLPG…FSSLETASSD (303 aa)). His974 functions as the Proton acceptor; for dehydratase activity in the catalytic mechanism. The interval 1091 to 1244 (NKDSYDRRWY…FSSLETASSD (154 aa)) is C-terminal hotdog fold. The Proton donor; for dehydratase activity role is filled by Asp1156. Residues 1295 to 1595 (VTRLAIRSSA…SGADVVLDDY (301 aa)) form a methyltransferase (CMet) domain region. The region spanning 1853–2154 (GRLDSFYFKE…QEDSVGLAVL (302 aa)) is the Enoyl reductase (ER) domain. Positions 2177–2357 (ASYLLIGCLG…QATSIALGMI (181 aa)) constitute a Ketoreductase (KR) domain. In terms of domain architecture, Carrier spans 2485 to 2563 (AVKSAILGLI…GLADQVVSLA (79 aa)). Ser2522 is subject to O-(pantetheine 4'-phosphoryl)serine.

It depends on pantetheine 4'-phosphate as a cofactor.

Its pathway is antifungal biosynthesis. In terms of biological role, highly reducing polyketide synthase; part of the gene cluster that mediates the biosynthesis of the tetrahydropyranyl antifungal agent restricticin that acts as an inhibitor of CYP51 and blocks the ergosterol biosynthesis. The highly reducing polyketide synthase resH, the short chain dehydrogenase resG, the cyclase resF, the FAD-dependent monooxygenase resA and the enoylreductase resD are required to generate the first stable intermediate desmethylrestrictinol. ResH with resD biosynthesize the first polyketide chain intermediate that is reduced by resG, followed by epoxidation by resA before 6-endo cyclization via epoxide opening by resF leads to desmethylrestrictinol. The methyltransferase resE then catalyzes the C4 O-methylation of desmethylrestrictinol to produce restrictinol, and the nonribosomal peptide synthetase resC catalyzes the C3 esterification of restrictinol with glycine that leads to restricticin. The protein is Highly reducing polyketide synthase resH of Aspergillus sclerotiorum.